The chain runs to 467 residues: Siroheme synthase 2 (467 aa).

A precorrin-2 dehydrogenase /sirohydrochlorin ferrochelatase region spans residues 1–204 (MDYLPIFCQL…NDVALAERQI (204 aa)). Residues 22-23 (EI) and 43-44 (CS) contribute to the NAD(+) site. Serine 128 carries the phosphoserine modification. Positions 216–467 (GEVVLVGAGP…EPSQPLAQMA (252 aa)) are uroporphyrinogen-III C-methyltransferase. Proline 225 provides a ligand contact to S-adenosyl-L-methionine. The active-site Proton acceptor is aspartate 248. The Proton donor role is filled by lysine 270. S-adenosyl-L-methionine is bound by residues 301–303 (GGD), isoleucine 306, 331–332 (TA), methionine 382, and glycine 411.

The protein in the N-terminal section; belongs to the precorrin-2 dehydrogenase / sirohydrochlorin ferrochelatase family. In the C-terminal section; belongs to the precorrin methyltransferase family.

The catalysed reaction is uroporphyrinogen III + 2 S-adenosyl-L-methionine = precorrin-2 + 2 S-adenosyl-L-homocysteine + H(+). It carries out the reaction precorrin-2 + NAD(+) = sirohydrochlorin + NADH + 2 H(+). The enzyme catalyses siroheme + 2 H(+) = sirohydrochlorin + Fe(2+). The protein operates within cofactor biosynthesis; adenosylcobalamin biosynthesis; precorrin-2 from uroporphyrinogen III: step 1/1. It participates in cofactor biosynthesis; adenosylcobalamin biosynthesis; sirohydrochlorin from precorrin-2: step 1/1. Its pathway is porphyrin-containing compound metabolism; siroheme biosynthesis; precorrin-2 from uroporphyrinogen III: step 1/1. It functions in the pathway porphyrin-containing compound metabolism; siroheme biosynthesis; siroheme from sirohydrochlorin: step 1/1. The protein operates within porphyrin-containing compound metabolism; siroheme biosynthesis; sirohydrochlorin from precorrin-2: step 1/1. In terms of biological role, multifunctional enzyme that catalyzes the SAM-dependent methylations of uroporphyrinogen III at position C-2 and C-7 to form precorrin-2 via precorrin-1. Then it catalyzes the NAD-dependent ring dehydrogenation of precorrin-2 to yield sirohydrochlorin. Finally, it catalyzes the ferrochelation of sirohydrochlorin to yield siroheme. In Serratia proteamaculans (strain 568), this protein is Siroheme synthase 2.